A 430-amino-acid polypeptide reads, in one-letter code: UPF0597 protein BDI_1130 (430 aa).

It belongs to the UPF0597 family.

In Parabacteroides distasonis (strain ATCC 8503 / DSM 20701 / CIP 104284 / JCM 5825 / NCTC 11152), this protein is UPF0597 protein BDI_1130.